We begin with the raw amino-acid sequence, 310 residues long: tRNA dimethylallyltransferase (310 aa).

Position 13 to 20 (13 to 20) interacts with ATP; the sequence is GPTASGKT. 15–20 serves as a coordination point for substrate; the sequence is TASGKT. Interaction with substrate tRNA stretches follow at residues 38–41, 162–166, 243–248, and 276–283; these read DSAL, QRLSR, RCVGYR, and KRQITWLR.

It belongs to the IPP transferase family. As to quaternary structure, monomer. Requires Mg(2+) as cofactor.

The enzyme catalyses adenosine(37) in tRNA + dimethylallyl diphosphate = N(6)-dimethylallyladenosine(37) in tRNA + diphosphate. Functionally, catalyzes the transfer of a dimethylallyl group onto the adenine at position 37 in tRNAs that read codons beginning with uridine, leading to the formation of N6-(dimethylallyl)adenosine (i(6)A). This Vibrio atlanticus (strain LGP32) (Vibrio splendidus (strain Mel32)) protein is tRNA dimethylallyltransferase.